Reading from the N-terminus, the 353-residue chain is Nicotinate-nucleotide--dimethylbenzimidazole phosphoribosyltransferase (353 aa).

The Proton acceptor role is filled by Glu318.

This sequence belongs to the CobT family.

The enzyme catalyses 5,6-dimethylbenzimidazole + nicotinate beta-D-ribonucleotide = alpha-ribazole 5'-phosphate + nicotinate + H(+). It participates in nucleoside biosynthesis; alpha-ribazole biosynthesis; alpha-ribazole from 5,6-dimethylbenzimidazole: step 1/2. Catalyzes the synthesis of alpha-ribazole-5'-phosphate from nicotinate mononucleotide (NAMN) and 5,6-dimethylbenzimidazole (DMB). This is Nicotinate-nucleotide--dimethylbenzimidazole phosphoribosyltransferase from Desulforudis audaxviator (strain MP104C).